The chain runs to 381 residues: Neuropeptide Y receptor type 2 (381 aa).

The interval 1–35 (MGPIGAEADENQTVEEMKVEQYGPQTTPRGELVPD) is disordered. Topologically, residues 1–51 (MGPIGAEADENQTVEEMKVEQYGPQTTPRGELVPDPEPELIDSTKLIEVQV) are extracellular. N-linked (GlcNAc...) asparagine glycosylation occurs at asparagine 11. Residues 52–72 (VLILAYCSIILLGVIGNSLVI) traverse the membrane as a helical segment. At 73–86 (HVVIKFKSMRTVTN) the chain is on the cytoplasmic side. Residues 87 to 107 (FFIANLAVADLLVNTLCLPFT) traverse the membrane as a helical segment. Residues 108–124 (LTYTLMGEWKMGPVLCH) lie on the Extracellular side of the membrane. Cysteine 123 and cysteine 203 form a disulfide bridge. Residues 125-145 (LVPYAQGLAVQVSTITLTVIA) form a helical membrane-spanning segment. The Cytoplasmic segment spans residues 146 to 165 (LDRHRCIVYHLESKISKRIS). A helical membrane pass occupies residues 166–186 (FLIIGLAWGISALLASPLAIF). The Extracellular segment spans residues 187–216 (REYSLIEIIPDFEIVACTEKWPGEEKSIYG). A helical membrane pass occupies residues 217-237 (TVYSLSSLLILYVLPLGIISF). The Cytoplasmic portion of the chain corresponds to 238-268 (SYTRIWSKLKNHVSPGAANDHYHQRRQKTTK). Residues 269 to 289 (MLVCVVVVFAVSWLPLHAFQL) form a helical membrane-spanning segment. The Extracellular segment spans residues 290-304 (AVDIDSQVLDLKEYK). The helical transmembrane segment at 305-325 (LIFTVFHIIAMCSTFANPLLY) threads the bilayer. Residues 326-381 (GWMNSNYRKAFLSAFRCEQRLDAIHSEVSVTFKAKKNLEVRKNSGPNDSFTEATNV) lie on the Cytoplasmic side of the membrane. Cysteine 342 carries the S-palmitoyl cysteine lipid modification.

This sequence belongs to the G-protein coupled receptor 1 family. As to expression, high levels in amygdala, corpus callosum, hippocampus and subthalamic nucleus. Also detectable in caudate nucleus, hypothalamus and substantia nigra.

It is found in the cell membrane. Receptor for neuropeptide Y and peptide YY. The rank order of affinity of this receptor for pancreatic polypeptides is PYY &gt; NPY &gt; PYY (3-36) &gt; NPY (2-36) &gt; [Ile-31, Gln-34] PP &gt; [Leu-31, Pro-34] NPY &gt; PP, [Pro-34] PYY and NPY free acid. This chain is Neuropeptide Y receptor type 2 (NPY2R), found in Homo sapiens (Human).